The following is a 337-amino-acid chain: tRNA N6-adenosine threonylcarbamoyltransferase (337 aa).

Residues H110 and H114 each contribute to the Fe cation site. Residues 132-136 (VVSGG), D165, G178, D182, and N268 each bind substrate. D293 is a Fe cation binding site.

This sequence belongs to the KAE1 / TsaD family. Requires Fe(2+) as cofactor.

It localises to the cytoplasm. The catalysed reaction is L-threonylcarbamoyladenylate + adenosine(37) in tRNA = N(6)-L-threonylcarbamoyladenosine(37) in tRNA + AMP + H(+). Functionally, required for the formation of a threonylcarbamoyl group on adenosine at position 37 (t(6)A37) in tRNAs that read codons beginning with adenine. Is involved in the transfer of the threonylcarbamoyl moiety of threonylcarbamoyl-AMP (TC-AMP) to the N6 group of A37, together with TsaE and TsaB. TsaD likely plays a direct catalytic role in this reaction. The chain is tRNA N6-adenosine threonylcarbamoyltransferase from Sulfurihydrogenibium sp. (strain YO3AOP1).